The primary structure comprises 282 residues: MANQLILLKKDFFTDEQQAVTVADRYPQDVFAEHTHEFCELVMVWRGNGLHVLNERPYRITRGDLFYIRAEDKHSYTSVNDLVLQNIIYCPERLKLNVNWQAMIPGFQGAQWHPHWRLGSMGMNQARQVINQLEHESNGRDPLANEMAELLFGQLVMTLKRHRYATDDLPATSRETLLDKLITALANSLECPFALDAFCQQEQCSERVLRQQFRAQTGMTINQYLRQVRICHAQYLLQHSPLMVSEISMQCGFEDSNYFSVVFTRETGMTPSQWRHLSNQSD.

One can recognise an HTH araC/xylS-type domain in the interval 179–277; it reads DKLITALANS…GMTPSQWRHL (99 aa). 2 DNA-binding regions (H-T-H motif) span residues 196–217 and 244–267; these read DAFC…RAQT and VSEI…TRET.

In terms of assembly, binds DNA as a dimer.

It localises to the cytoplasm. Its function is as follows. Activates expression of the rhaSR operon in response to L-rhamnose. This chain is HTH-type transcriptional activator RhaR, found in Salmonella typhi.